A 161-amino-acid polypeptide reads, in one-letter code: MSSFTHFNDQGRAKMVDISDKKITVRTAIACSSILVTKEIFDKISHNEIGKGDVLAVAQIAGIMAAKRTSDIIPMCHPLLLKGVDVSFDWKQSEEQYRLLIEVKVKTEGSTGVEMEALTAASATALTVYDMCKAVDKGMIIGETYLLEKTGGKNGDYIRNS.

Substrate-binding positions include 75-77 and 115-116; these read MCH and ME. The active site involves D130.

Belongs to the MoaC family. As to quaternary structure, homohexamer; trimer of dimers.

The enzyme catalyses (8S)-3',8-cyclo-7,8-dihydroguanosine 5'-triphosphate = cyclic pyranopterin phosphate + diphosphate. It functions in the pathway cofactor biosynthesis; molybdopterin biosynthesis. Catalyzes the conversion of (8S)-3',8-cyclo-7,8-dihydroguanosine 5'-triphosphate to cyclic pyranopterin monophosphate (cPMP). This Bacillus mycoides (strain KBAB4) (Bacillus weihenstephanensis) protein is Cyclic pyranopterin monophosphate synthase.